The primary structure comprises 409 residues: uncharacterized protein (409 aa).

10 helical membrane-spanning segments follow: residues 22-42 (ILIIIGICHMLNDSLQAVIPA), 58-78 (LGIIAFTLNMVSSVMQPVVGW), 99-119 (GILGLAFAPSFITILCCVFFI), 174-194 (FGAVWFTLVAALAVMFLMYIA), 217-237 (NTAITKSVVSALIIIIFLIFA), 266-286 (SYIFVFLLFGAIGTFLGGPLA), 293-312 (FVILGSLLCSAPLAIVLPFA), 316-338 (LAYGVLALIGLVLMSSFSVTVVY), 353-373 (LTVGLAFGMGAIGAVALGALI), and 378-398 (LTPTMIAIAFLPVLGILAFLL).

The protein belongs to the major facilitator superfamily.

It is found in the cell membrane. This is an uncharacterized protein from Bacillus subtilis (strain 168).